Here is a 535-residue protein sequence, read N- to C-terminus: uncharacterized protein (535 aa).

WD repeat units lie at residues 189-226, 228-267, 269-314, 320-359, 362-404, and 462-505; these read RDDF…TRVL, ESIY…PRIS, HHPG…AVLV, AHDE…QPLY, QQNA…KIDE, and VHSV…SWHN.

This sequence belongs to the WD repeat CDC20/Fizzy family.

This is an uncharacterized protein from Schizosaccharomyces pombe (strain 972 / ATCC 24843) (Fission yeast).